Reading from the N-terminus, the 445-residue chain is tRNA modification GTPase MnmE (445 aa).

The (6S)-5-formyl-5,6,7,8-tetrahydrofolate site is built by Arg-20, Glu-79, and Lys-119. The TrmE-type G domain maps to 215–371 (GLKLAIIGPP…ILKNIENIAE (157 aa)). A K(+)-binding site is contributed by Asn-225. GTP is bound by residues 225–230 (NTGKSS), 244–250 (SNIAGTT), and 269–272 (DTAG). A Mg(2+)-binding site is contributed by Ser-229. The K(+) site is built by Ser-244, Ile-246, and Thr-249. Thr-250 is a binding site for Mg(2+). Lys-445 lines the (6S)-5-formyl-5,6,7,8-tetrahydrofolate pocket.

This sequence belongs to the TRAFAC class TrmE-Era-EngA-EngB-Septin-like GTPase superfamily. TrmE GTPase family. Homodimer. Heterotetramer of two MnmE and two MnmG subunits. K(+) serves as cofactor.

Its subcellular location is the cytoplasm. Exhibits a very high intrinsic GTPase hydrolysis rate. Involved in the addition of a carboxymethylaminomethyl (cmnm) group at the wobble position (U34) of certain tRNAs, forming tRNA-cmnm(5)s(2)U34. The protein is tRNA modification GTPase MnmE of Rickettsia prowazekii (strain Madrid E).